The following is an 85-amino-acid chain: U4-theraphotoxin-Hhn1a (85 aa).

Residues 1–22 (MKMTLIAILTCAAVLVLHITAA) form the signal peptide. A propeptide spanning residues 23-48 (EELEAESQLMEVGMPDTELEAVDEER) is cleaved from the precursor. 3 disulfide bridges follow: cysteine 52–cysteine 66, cysteine 56–cysteine 77, and cysteine 71–cysteine 82.

The protein belongs to the neurotoxin 12 (Hwtx-2) family. 02 (Hwtx-2) subfamily. Monomer. In terms of tissue distribution, expressed by the venom gland.

The protein localises to the secreted. In terms of biological role, neurotoxin active on both insects and mammals. In Cyriopagopus hainanus (Chinese bird spider), this protein is U4-theraphotoxin-Hhn1a.